Here is a 181-residue protein sequence, read N- to C-terminus: UPF0232 protein MAP_0004 (181 aa).

A compositionally biased stretch (polar residues) spans 1 to 11; the sequence is MSDDQSPSPSG. Disordered stretches follow at residues 1 to 70 and 161 to 181; these read MSDD…PQPL and APSW…DTYG. Residues 18 to 39 show a composition bias toward basic and acidic residues; it reads LVRRTLEEARAAARAQGKDAGR. Residues 40–50 show a composition bias toward low complexity; it reads GRAAAPTPRRV.

The protein belongs to the UPF0232 family.

The protein is UPF0232 protein MAP_0004 of Mycolicibacterium paratuberculosis (strain ATCC BAA-968 / K-10) (Mycobacterium paratuberculosis).